The following is a 160-amino-acid chain: S-ribosylhomocysteine lyase (160 aa).

Fe cation-binding residues include His-57, His-61, and Cys-127.

The protein belongs to the LuxS family. As to quaternary structure, homodimer. Fe cation is required as a cofactor.

It catalyses the reaction S-(5-deoxy-D-ribos-5-yl)-L-homocysteine = (S)-4,5-dihydroxypentane-2,3-dione + L-homocysteine. In terms of biological role, involved in the synthesis of autoinducer 2 (AI-2) which is secreted by bacteria and is used to communicate both the cell density and the metabolic potential of the environment. The regulation of gene expression in response to changes in cell density is called quorum sensing. Catalyzes the transformation of S-ribosylhomocysteine (RHC) to homocysteine (HC) and 4,5-dihydroxy-2,3-pentadione (DPD). The sequence is that of S-ribosylhomocysteine lyase from Streptococcus uberis (strain ATCC BAA-854 / 0140J).